The primary structure comprises 90 residues: Small ribosomal subunit protein bS20 (90 aa).

This sequence belongs to the bacterial ribosomal protein bS20 family.

Its function is as follows. Binds directly to 16S ribosomal RNA. This chain is Small ribosomal subunit protein bS20, found in Acidiphilium cryptum (strain JF-5).